The sequence spans 171 residues: T-cell surface glycoprotein CD3 delta chain (171 aa).

A signal peptide spans 1–21; sequence MEHSTFLSGLVLATLLSQVSP. The Extracellular portion of the chain corresponds to 22–105; it reads FKIPIEELED…CVELDPATVA (84 aa). Cys37 and Cys73 form a disulfide bridge. 2 N-linked (GlcNAc...) asparagine glycosylation sites follow: Asn38 and Asn74. The chain crosses the membrane as a helical span at residues 106–126; that stretch reads GIIVTDVIATLLLALGVFCFA. Residues 127 to 171 lie on the Cytoplasmic side of the membrane; the sequence is GHETGRLSGAADTQALLRNDQVYQPLRDRDDAQYSHLGGNWARNK. The ITAM domain maps to 138–166; sequence DTQALLRNDQVYQPLRDRDDAQYSHLGGN. A phosphotyrosine mark is found at Tyr149 and Tyr160.

In terms of assembly, the TCR-CD3 complex is composed of a CD3D/CD3E and a CD3G/CD3E heterodimers that preferentially associate with TCRalpha and TCRbeta, respectively, to form TCRalpha/CD3E/CD3G and TCRbeta/CD3G/CD3E trimers. In turn, the hexamer interacts with CD3Z homodimer to form the TCR-CD3 complex. Alternatively, TCRalpha and TCRbeta can be replaced by TCRgamma and TCRdelta. Interacts with coreceptors CD4 and CD8. Post-translationally, phosphorylated on Tyr residues after T-cell receptor triggering by LCK in association with CD4/CD8. In terms of tissue distribution, CD3D is mostly present on T-lymphocytes with its TCR-CD3 partners. Present also in fetal NK-cells.

The protein localises to the cell membrane. In terms of biological role, part of the TCR-CD3 complex present on T-lymphocyte cell surface that plays an essential role in adaptive immune response. When antigen presenting cells (APCs) activate T-cell receptor (TCR), TCR-mediated signals are transmitted across the cell membrane by the CD3 chains CD3D, CD3E, CD3G and CD3Z. All CD3 chains contain immunoreceptor tyrosine-based activation motifs (ITAMs) in their cytoplasmic domain. Upon TCR engagement, these motifs become phosphorylated by Src family protein tyrosine kinases LCK and FYN, resulting in the activation of downstream signaling pathways. In addition of this role of signal transduction in T-cell activation, CD3D plays an essential role in thymocyte differentiation. Indeed, participates in correct intracellular TCR-CD3 complex assembly and surface expression. In absence of a functional TCR-CD3 complex, thymocytes are unable to differentiate properly. Interacts with CD4 and CD8 and thus serves to establish a functional link between the TCR and coreceptors CD4 and CD8, which is needed for activation and positive selection of CD4 or CD8 T-cells. In Homo sapiens (Human), this protein is T-cell surface glycoprotein CD3 delta chain (CD3D).